Here is an 879-residue protein sequence, read N- to C-terminus: DNA mismatch repair protein MutS (879 aa).

ATP is bound at residue 629–636; the sequence is GPNMAGKS.

Belongs to the DNA mismatch repair MutS family.

Its function is as follows. This protein is involved in the repair of mismatches in DNA. It is possible that it carries out the mismatch recognition step. This protein has a weak ATPase activity. The chain is DNA mismatch repair protein MutS from Ruegeria sp. (strain TM1040) (Silicibacter sp.).